The chain runs to 214 residues: Pyridoxine/pyridoxamine 5'-phosphate oxidase (214 aa).

Residues 11 to 14 (RREY) and Lys-68 contribute to the substrate site. Residues 63-68 (RLVLLK), 78-79 (FT), Arg-84, Lys-85, and Gln-107 contribute to the FMN site. 2 residues coordinate substrate: Tyr-125 and Arg-129. FMN is bound by residues 142–143 (QS) and Trp-187. Residue 193-195 (RLH) coordinates substrate. Residue Arg-197 participates in FMN binding.

The protein belongs to the pyridoxamine 5'-phosphate oxidase family. Homodimer. Requires FMN as cofactor.

It catalyses the reaction pyridoxamine 5'-phosphate + O2 + H2O = pyridoxal 5'-phosphate + H2O2 + NH4(+). It carries out the reaction pyridoxine 5'-phosphate + O2 = pyridoxal 5'-phosphate + H2O2. Its pathway is cofactor metabolism; pyridoxal 5'-phosphate salvage; pyridoxal 5'-phosphate from pyridoxamine 5'-phosphate: step 1/1. The protein operates within cofactor metabolism; pyridoxal 5'-phosphate salvage; pyridoxal 5'-phosphate from pyridoxine 5'-phosphate: step 1/1. Catalyzes the oxidation of either pyridoxine 5'-phosphate (PNP) or pyridoxamine 5'-phosphate (PMP) into pyridoxal 5'-phosphate (PLP). The polypeptide is Pyridoxine/pyridoxamine 5'-phosphate oxidase (Blochmanniella floridana).